The sequence spans 165 residues: Cyclic pyranopterin monophosphate synthase (165 aa).

Substrate contacts are provided by residues 76 to 78 and 113 to 114; these read MCH and IE. Asp128 is a catalytic residue.

The protein belongs to the MoaC family. Homohexamer; trimer of dimers.

It catalyses the reaction (8S)-3',8-cyclo-7,8-dihydroguanosine 5'-triphosphate = cyclic pyranopterin phosphate + diphosphate. It functions in the pathway cofactor biosynthesis; molybdopterin biosynthesis. Its function is as follows. Catalyzes the conversion of (8S)-3',8-cyclo-7,8-dihydroguanosine 5'-triphosphate to cyclic pyranopterin monophosphate (cPMP). The polypeptide is Cyclic pyranopterin monophosphate synthase (Limosilactobacillus fermentum (strain NBRC 3956 / LMG 18251) (Lactobacillus fermentum)).